Reading from the N-terminus, the 582-residue chain is Methionine--tRNA ligase (582 aa).

The 'HIGH' region signature appears at 24–34 (PYIYAVPHLGN). Zn(2+)-binding residues include Cys-156, Cys-159, Cys-169, and Cys-172. The 'KMSKS' region motif lies at 346 to 350 (KFSKS). Lys-349 contributes to the ATP binding site.

It belongs to the class-I aminoacyl-tRNA synthetase family. MetG type 1 subfamily. Requires Zn(2+) as cofactor.

The protein resides in the cytoplasm. The catalysed reaction is tRNA(Met) + L-methionine + ATP = L-methionyl-tRNA(Met) + AMP + diphosphate. Functionally, is required not only for elongation of protein synthesis but also for the initiation of all mRNA translation through initiator tRNA(fMet) aminoacylation. This chain is Methionine--tRNA ligase, found in Caldivirga maquilingensis (strain ATCC 700844 / DSM 13496 / JCM 10307 / IC-167).